The primary structure comprises 416 residues: Homogentisate 1,2-dioxygenase (416 aa).

The active-site Proton acceptor is the His-275. Residues His-318 and Glu-324 each coordinate Fe cation. The homogentisate site is built by Tyr-333 and His-354. His-354 provides a ligand contact to Fe cation.

It belongs to the homogentisate dioxygenase family. In terms of assembly, hexamer; dimer of trimers. Fe cation is required as a cofactor.

The catalysed reaction is homogentisate + O2 = 4-maleylacetoacetate + H(+). It functions in the pathway amino-acid degradation; L-phenylalanine degradation; acetoacetate and fumarate from L-phenylalanine: step 4/6. Involved in the catabolism of homogentisate (2,5-dihydroxyphenylacetate or 2,5-OH-PhAc), a central intermediate in the degradation of phenylalanine and tyrosine. Catalyzes the oxidative ring cleavage of the aromatic ring of homogentisate to yield maleylacetoacetate. The polypeptide is Homogentisate 1,2-dioxygenase (Legionella pneumophila subsp. pneumophila (strain Philadelphia 1 / ATCC 33152 / DSM 7513)).